Reading from the N-terminus, the 314-residue chain is Methionyl-tRNA formyltransferase (314 aa).

110 to 113 (SLLP) lines the (6S)-5,6,7,8-tetrahydrofolate pocket.

Belongs to the Fmt family.

It carries out the reaction L-methionyl-tRNA(fMet) + (6R)-10-formyltetrahydrofolate = N-formyl-L-methionyl-tRNA(fMet) + (6S)-5,6,7,8-tetrahydrofolate + H(+). Its function is as follows. Attaches a formyl group to the free amino group of methionyl-tRNA(fMet). The formyl group appears to play a dual role in the initiator identity of N-formylmethionyl-tRNA by promoting its recognition by IF2 and preventing the misappropriation of this tRNA by the elongation apparatus. This is Methionyl-tRNA formyltransferase from Bacillus cereus (strain AH187).